The primary structure comprises 212 residues: tRNA (guanine-N(7)-)-methyltransferase (212 aa).

Residues glutamate 44, glutamate 69, aspartate 96, and aspartate 118 each contribute to the S-adenosyl-L-methionine site. The active site involves aspartate 118. Lysine 122 provides a ligand contact to substrate. An interaction with RNA region spans residues 124–129; that stretch reads RHEKRR. Substrate-binding positions include aspartate 154 and 192–195; that span reads TEYE.

The protein belongs to the class I-like SAM-binding methyltransferase superfamily. TrmB family.

The catalysed reaction is guanosine(46) in tRNA + S-adenosyl-L-methionine = N(7)-methylguanosine(46) in tRNA + S-adenosyl-L-homocysteine. It participates in tRNA modification; N(7)-methylguanine-tRNA biosynthesis. Its function is as follows. Catalyzes the formation of N(7)-methylguanine at position 46 (m7G46) in tRNA. This chain is tRNA (guanine-N(7)-)-methyltransferase, found in Pediococcus pentosaceus (strain ATCC 25745 / CCUG 21536 / LMG 10740 / 183-1w).